Consider the following 233-residue polypeptide: Large ribosomal subunit protein uL1 (233 aa).

The protein belongs to the universal ribosomal protein uL1 family. In terms of assembly, part of the 50S ribosomal subunit.

Its function is as follows. Binds directly to 23S rRNA. The L1 stalk is quite mobile in the ribosome, and is involved in E site tRNA release. Protein L1 is also a translational repressor protein, it controls the translation of the L11 operon by binding to its mRNA. The sequence is that of Large ribosomal subunit protein uL1 from Syntrophotalea carbinolica (strain DSM 2380 / NBRC 103641 / GraBd1) (Pelobacter carbinolicus).